The following is a 377-amino-acid chain: Methionine import ATP-binding protein MetN 2 (377 aa).

The ABC transporter domain maps to 25 to 262 (IRIEHLSKTF…PKSAVARSFL (238 aa)). 59 to 66 (GRSGAGKS) is an ATP binding site.

It belongs to the ABC transporter superfamily. Methionine importer (TC 3.A.1.24) family. In terms of assembly, the complex is composed of two ATP-binding proteins (MetN), two transmembrane proteins (MetI) and a solute-binding protein (MetQ).

It is found in the cell inner membrane. The catalysed reaction is L-methionine(out) + ATP + H2O = L-methionine(in) + ADP + phosphate + H(+). It carries out the reaction D-methionine(out) + ATP + H2O = D-methionine(in) + ADP + phosphate + H(+). Functionally, part of the ABC transporter complex MetNIQ involved in methionine import. Responsible for energy coupling to the transport system. This chain is Methionine import ATP-binding protein MetN 2, found in Rhodopseudomonas palustris (strain ATCC BAA-98 / CGA009).